We begin with the raw amino-acid sequence, 322 residues long: Acetyl-coenzyme A carboxylase carboxyl transferase subunit alpha (322 aa).

Residues 32–293 (DISEEIARLE…KRALQDALRQ (262 aa)) form the CoA carboxyltransferase C-terminal domain.

It belongs to the AccA family. As to quaternary structure, acetyl-CoA carboxylase is a heterohexamer composed of biotin carboxyl carrier protein (AccB), biotin carboxylase (AccC) and two subunits each of ACCase subunit alpha (AccA) and ACCase subunit beta (AccD).

Its subcellular location is the cytoplasm. The enzyme catalyses N(6)-carboxybiotinyl-L-lysyl-[protein] + acetyl-CoA = N(6)-biotinyl-L-lysyl-[protein] + malonyl-CoA. The protein operates within lipid metabolism; malonyl-CoA biosynthesis; malonyl-CoA from acetyl-CoA: step 1/1. Component of the acetyl coenzyme A carboxylase (ACC) complex. First, biotin carboxylase catalyzes the carboxylation of biotin on its carrier protein (BCCP) and then the CO(2) group is transferred by the carboxyltransferase to acetyl-CoA to form malonyl-CoA. This chain is Acetyl-coenzyme A carboxylase carboxyl transferase subunit alpha, found in Aromatoleum aromaticum (strain DSM 19018 / LMG 30748 / EbN1) (Azoarcus sp. (strain EbN1)).